The sequence spans 547 residues: Alpha-humulene/(-)-(E)-beta-caryophyllene synthase (547 aa).

(2E,6E)-farnesyl diphosphate contacts are provided by arginine 262, aspartate 299, aspartate 303, arginine 442, and aspartate 445. Aspartate 299 and aspartate 303 together coordinate Mg(2+). Residues 299 to 303 (DDMYD) carry the DDXXD motif motif. Residues aspartate 445, aspartate 446, serine 449, and glutamate 453 each contribute to the Mg(2+) site.

It belongs to the terpene synthase family. Tpsa subfamily. In terms of assembly, monomer. Mg(2+) is required as a cofactor. The cofactor is Mn(2+). Expressed exclusively in flowers. Expressed in the flower stigmata and also detected in the mesocarp cell layers of the silique wall.

Its subcellular location is the cytoplasm. It catalyses the reaction (2E,6E)-farnesyl diphosphate = (-)-(E)-beta-caryophyllene + diphosphate. The enzyme catalyses (2E,6E)-farnesyl diphosphate = alpha-copaene + diphosphate. It carries out the reaction (2E,6E)-farnesyl diphosphate = alpha-humulene + diphosphate. The catalysed reaction is (2E,6E)-farnesyl diphosphate = (1S,2S,4R)-beta-elemene + diphosphate. It participates in secondary metabolite biosynthesis; terpenoid biosynthesis. Involved in sesquiterpene (C15) biosynthesis. The major products are beta-caryophyllene and alpha-humulene. Does not convert geranyl diphosphate (GPP) to any monoterpenes. In Arabidopsis thaliana (Mouse-ear cress), this protein is Alpha-humulene/(-)-(E)-beta-caryophyllene synthase.